A 417-amino-acid chain; its full sequence is MDNHANEINKLSRELGLLSNYEFNMDELKNLSPLDSTSSSIYIGDNLTYLQGLSKTSPKTIDFCYIDPPYNTGNKIIYHDNRKSVSSDIFGLHNEWMSFLLPRLFHAHKMLKDTGIIAISIDDYEFAHLKILMDKIFGEDNFIGNIVVCRSKNGKGSKRNIASAHEYLLVYGKSDMAELSGQPDDKSLYDKVDCFGEYRIDGMFRKKGDSSLRTDRPNMFYPLYFNPSTGEVQVEPELGLKTVYPIDSKGIERRWLWSKETARERSWELFASKNGVVYVKNYSSSHKRIKVRTLWNDSSFYTERATNEITKIFGSKVFDTPKALNYIMSIINCMAKPDALILDFFAGSGTTAHAAAVLNSLDGGSRKTILMESNHPITKTHIAYKSGFRKISDITISRLNYVSDNFPDFKYKKIEII.

It belongs to the N(4)/N(6)-methyltransferase family.

The enzyme catalyses a 2'-deoxyadenosine in DNA + S-adenosyl-L-methionine = an N(6)-methyl-2'-deoxyadenosine in DNA + S-adenosyl-L-homocysteine + H(+). In terms of biological role, a beta subtype methylase, recognizes the double-stranded sequence 5'-GGTACC-3', methylates A-4 on both strands, and protects the DNA from cleavage by the KpnI endonuclease. This is Type II methyltransferase M.KpnI from Klebsiella pneumoniae.